A 118-amino-acid polypeptide reads, in one-letter code: MICOS complex subunit MIC13 (118 aa).

The Mitochondrial matrix segment spans residues 1–7 (MVARVWS). A helical transmembrane segment spans residues 8 to 26 (LMRFLIKGSVAGGAVYLVY). Residues 27–118 (DQELLGPSDK…GWEYVKARTK (92 aa)) are Mitochondrial intermembrane-facing.

The protein belongs to the MICOS complex subunit Mic13 family. As to quaternary structure, component of the mitochondrial contact site and cristae organizing system (MICOS) complex, composed of at least MICOS10/MIC10, CHCHD3/MIC19, CHCHD6/MIC25, APOO/MIC26, MICOS13/MIC13, APOOL/MIC27 and IMMT/MIC60. The complex associates with mitochondrial outer membrane proteins SAMM50, MTX1 and MTX2, and with HSPA9.

It localises to the mitochondrion inner membrane. Its function is as follows. Component of the MICOS complex, a large protein complex of the mitochondrial inner membrane that plays crucial roles in the maintenance of crista junctions, inner membrane architecture, and formation of contact sites to the outer membrane. Constituent of mature MICOS complex, it is required for the formation of cristae junction (CJ) and maintenance of cristae morphology. Required for the incorporation of MICOS10/MIC10 into the MICOS complex. The sequence is that of MICOS complex subunit MIC13 from Macaca fascicularis (Crab-eating macaque).